Here is a 414-residue protein sequence, read N- to C-terminus: Glutamyl-tRNA reductase (414 aa).

Substrate is bound by residues 49–52 (TCNR), Ser108, 113–115 (EPQ), and Gln119. Cys50 (nucleophile) is an active-site residue. An NADP(+)-binding site is contributed by 188–193 (GAGQTG).

It belongs to the glutamyl-tRNA reductase family. In terms of assembly, homodimer.

The enzyme catalyses (S)-4-amino-5-oxopentanoate + tRNA(Glu) + NADP(+) = L-glutamyl-tRNA(Glu) + NADPH + H(+). Its pathway is porphyrin-containing compound metabolism; protoporphyrin-IX biosynthesis; 5-aminolevulinate from L-glutamyl-tRNA(Glu): step 1/2. Functionally, catalyzes the NADPH-dependent reduction of glutamyl-tRNA(Glu) to glutamate 1-semialdehyde (GSA). In Francisella tularensis subsp. holarctica (strain LVS), this protein is Glutamyl-tRNA reductase.